The chain runs to 825 residues: Arabinolytic transcriptional activator araR (825 aa).

Positions 1 to 17 (MASSHQGNGTVPNSQTD) are enriched in polar residues. The tract at residues 1 to 28 (MASSHQGNGTVPNSQTDAPPDSSTKRRW) is disordered. Positions 35-61 (CDSCHARRVRCDRQFPCSRCLRSEITC) form a DNA-binding region, zn(2)-C6 fungal-type. The interval 117-152 (STFHHRSPPANAPTVSAPSVDGRRSQTDPQLPVRRP) is disordered.

This sequence belongs to the xlnR/xlr1 family. araR subfamily.

The protein localises to the nucleus. In terms of biological role, transcriptional activator of the arabinanolytic system. Involved in the regulation of extracellular arabinanolytic genes and in the regulation of the intracellular activities of L-arabinose catabolic genes in the pentose catabolic pathway (PCP) in response to the presence of L-arabinose. In Emericella nidulans (strain FGSC A4 / ATCC 38163 / CBS 112.46 / NRRL 194 / M139) (Aspergillus nidulans), this protein is Arabinolytic transcriptional activator araR.